A 535-amino-acid polypeptide reads, in one-letter code: Peptide chain release factor 3 (535 aa).

In terms of domain architecture, tr-type G spans 8 to 276 (ARRRTFAIIS…ALVDLAPQPG (269 aa)). GTP-binding positions include 17–24 (SHPDAGKT), 85–89 (DTPGH), and 139–142 (NKMD).

It belongs to the TRAFAC class translation factor GTPase superfamily. Classic translation factor GTPase family. PrfC subfamily.

It localises to the cytoplasm. Increases the formation of ribosomal termination complexes and stimulates activities of RF-1 and RF-2. It binds guanine nucleotides and has strong preference for UGA stop codons. It may interact directly with the ribosome. The stimulation of RF-1 and RF-2 is significantly reduced by GTP and GDP, but not by GMP. The chain is Peptide chain release factor 3 from Bordetella avium (strain 197N).